We begin with the raw amino-acid sequence, 280 residues long: 30 kDa immediate-early protein 2 (280 aa).

Positions 36–164 (SEEEQGEEVE…KKSKRISELD (129 aa)) are disordered. Low complexity-rich tracts occupy residues 47-67 (RGAT…TSPT), 90-101 (SSSSSSCSSASD), and 132-147 (AASS…SSGG).

Activates the E1.7 promoter. This activation is augmented by the IE1 protein. It down-regulates the transcription of genes under the control of the major IE promoter. In Human cytomegalovirus (strain Towne) (HHV-5), this protein is 30 kDa immediate-early protein 2 (UL122).